We begin with the raw amino-acid sequence, 171 residues long: 3-hydroxydecanoyl-[acyl-carrier-protein] dehydratase (171 aa).

The active site involves histidine 71.

It belongs to the thioester dehydratase family. FabA subfamily. In terms of assembly, homodimer.

The protein resides in the cytoplasm. It carries out the reaction a (3R)-hydroxyacyl-[ACP] = a (2E)-enoyl-[ACP] + H2O. The catalysed reaction is (3R)-hydroxydecanoyl-[ACP] = (2E)-decenoyl-[ACP] + H2O. It catalyses the reaction (2E)-decenoyl-[ACP] = (3Z)-decenoyl-[ACP]. It participates in lipid metabolism; fatty acid biosynthesis. In terms of biological role, necessary for the introduction of cis unsaturation into fatty acids. Catalyzes the dehydration of (3R)-3-hydroxydecanoyl-ACP to E-(2)-decenoyl-ACP and then its isomerization to Z-(3)-decenoyl-ACP. Can catalyze the dehydratase reaction for beta-hydroxyacyl-ACPs with saturated chain lengths up to 16:0, being most active on intermediate chain length. This Hamiltonella defensa subsp. Acyrthosiphon pisum (strain 5AT) protein is 3-hydroxydecanoyl-[acyl-carrier-protein] dehydratase.